The sequence spans 586 residues: Merlin (586 aa).

Position 9 is a phosphoserine (S9). The 290-residue stretch at 18–307 folds into the FERM domain; it reads FTVRIVTMDA…GNHDLFMRRR (290 aa). Positions 325–354 are disordered; that stretch reads KARKQMERQRLAREKQMREEAERSRDEPER. S514 is modified (phosphoserine; by PAK). A disordered region spans residues 557–586; sequence LHSEHSDSGTSSKHNTIKKPQAQGRRPICI.

As to quaternary structure, interacts with NHERF1, HGS and AGAP2. Interacts with SGSM3. Interacts (via FERM domain) with MPP1. Interacts with LAYN and WWC1. Interacts with the CUL4A-RBX1-DDB1-VprBP/DCAF1 E3 ubiquitin-protein ligase complex. The unphosphorylated form interacts (via FERM domain) with VPRBP/DCAF1. Interacts (via FERM domain) with NOP53; the interaction is direct. Interacts with SCHIP1; the interaction is direct. Ubiquitinated by the CUL4A-RBX1-DDB1-DCAF1/VprBP E3 ubiquitin-protein ligase complex for ubiquitination and subsequent proteasome-dependent degradation. In terms of processing, phosphorylation of Ser-514 inhibits nuclear localization by disrupting the intramolecular association of the FERM domain with the C-terminal tail. The dephosphorylation of Ser-514 favors the interaction with NOP53.

Its subcellular location is the cell membrane. It is found in the cell projection. The protein resides in the cytoplasm. It localises to the cytoskeleton. The protein localises to the nucleus. Its function is as follows. Probable regulator of the Hippo/SWH (Sav/Wts/Hpo) signaling pathway, a signaling pathway that plays a pivotal role in tumor suppression by restricting proliferation and promoting apoptosis. Along with WWC1 can synergistically induce the phosphorylation of LATS1 and LATS2 and can probably function in the regulation of the Hippo/SWH (Sav/Wts/Hpo) signaling pathway. May act as a membrane stabilizing protein. May inhibit PI3 kinase by binding to AGAP2 and impairing its stimulating activity. Suppresses cell proliferation and tumorigenesis by inhibiting the CUL4A-RBX1-DDB1-VprBP/DCAF1 E3 ubiquitin-protein ligase complex Plays a role in lens development and is required for complete fiber cell terminal differentiation, maintenance of cell polarity and separation of the lens vesicle from the corneal epithelium. This is Merlin (Nf2) from Rattus norvegicus (Rat).